An 853-amino-acid chain; its full sequence is Thrombospondin type-1 domain-containing protein 1 (853 aa).

The N-terminal stretch at 1-24 is a signal peptide; that stretch reads MKPMLKDFSNLLLVVLCDYVLGEA. At 25–414 the chain is on the extracellular side; sequence EYLLLREPGH…QPQGPVKSNN (390 aa). 7 N-linked (GlcNAc...) asparagine glycosylation sites follow: N39, N53, N58, N69, N80, N135, and N304. The region spanning 341–394 is the TSP type-1 domain; sequence IETWGLWQPWSQCSATCGDGVRERRRVCLTSFPSRPGCPGMSLEASLCSLEECA. 3 disulfide bridges follow: C353–C388, C357–C393, and C368–C378. A helical membrane pass occupies residues 415-435; that stretch reads IVTVTGISLCLFIIIATVLIT. The Cytoplasmic portion of the chain corresponds to 436–853; sequence LWRRFGRPAK…STLSVEKLVI (418 aa). Disordered regions lie at residues 445 to 518, 624 to 650, 668 to 702, and 714 to 800; these read KCST…ESFQ, TLIR…RNAH, ERSM…QSRG, and QEAS…RKDK. S464 bears the Phosphoserine mark. Polar residues predominate over residues 671–686; that stretch reads MSTLTPRQAPAYSTRT. A compositionally biased stretch (basic and acidic residues) spans 687–697; sequence RTCEQAEDRFR. Polar residues predominate over residues 767 to 795; that stretch reads SHKSVSRKQSSPTSPKDSYQRVSPLSPSQ.

Part of a complex composed of THSD1, PTK2/FAK1, TLN1 and VCL. Interacts with TLN1.

It is found in the endosome membrane. The protein localises to the cell junction. The protein resides in the focal adhesion. In terms of biological role, is a positive regulator of nascent focal adhesion assembly, involved in the modulation of endothelial cell attachment to the extracellular matrix. This chain is Thrombospondin type-1 domain-containing protein 1 (THSD1), found in Pongo abelii (Sumatran orangutan).